A 1827-amino-acid chain; its full sequence is Phenolphthiocerol/phthiocerol polyketide synthase subunit C (1827 aa).

Positions 35–461 (CEPVAVVGIG…GTNAHVVVEQ (427 aa)) constitute a Ketosynthase family 3 (KS3) domain. Catalysis depends on for beta-ketoacyl synthase activity residues cysteine 207, histidine 342, and histidine 383. The interval 566–876 (VFVYSGQGSQ…LAAVGVAASE (311 aa)) is acyltransferase. Serine 654 serves as the catalytic For malonyltransferase activity. Residues 910 to 1037 (HPLLGAHIEM…AKVEQSPREC (128 aa)) are N-terminal hotdog fold. Residues 910–1076 (HPLLGAHIEM…QHHGPAFAAL (167 aa)) are dehydratase. A PKS/mFAS DH domain is found at 910–1198 (HPLLGAHIEM…LRRVERRAVP (289 aa)). The active-site Proton acceptor; for dehydratase activity is histidine 942. The segment at 1050–1198 (GTTVSPADFY…LRRVERRAVP (149 aa)) is C-terminal hotdog fold. Aspartate 1111 functions as the Proton donor; for dehydratase activity in the catalytic mechanism. The tract at residues 1439–1617 (ASYVVTGGLG…VINWGPWSEV (179 aa)) is beta-ketoacyl reductase. 1440–1485 (SYVVTGGLGGLGLVVARWLVDRGAGRVVLGGRSDPTDEQCNVLAEL) lines the NADP(+) pocket. One can recognise a Carrier domain in the interval 1706–1785 (RAVTERMCAR…DLTADLMRQL (80 aa)). An O-(pantetheine 4'-phosphoryl)serine modification is found at serine 1745.

It depends on NADP(+) as a cofactor. Requires pantetheine 4'-phosphate as cofactor.

It carries out the reaction icosanoyl-[(phenol)carboxyphthiodiolenone synthase] + 2 (S)-methylmalonyl-CoA + 3 malonyl-CoA + 5 NADPH + 10 H(+) = C32-carboxyphthiodiolenone-[(phenol)carboxyphthiodiolenone synthase] + 5 CO2 + 5 NADP(+) + 5 CoA + 2 H2O. The catalysed reaction is docosanoyl-[(phenol)carboxyphthiodiolenone synthase] + 2 (S)-methylmalonyl-CoA + 3 malonyl-CoA + 5 NADPH + 10 H(+) = C34-carboxyphthiodiolenone-[(phenol)carboxyphthiodiolenone synthase] + 5 CO2 + 5 NADP(+) + 5 CoA + 2 H2O. It catalyses the reaction 17-(4-hydroxyphenyl)heptadecanoyl-[(phenol)carboxyphthiodiolenone synthase] + 2 (S)-methylmalonyl-CoA + 3 malonyl-CoA + 5 NADPH + 10 H(+) = C35-(phenol)carboxyphthiodiolenone-[(phenol)carboxyphthiodiolenone synthase] + 5 CO2 + 5 NADP(+) + 5 CoA + 2 H2O. The enzyme catalyses 19-(4-hydroxyphenyl)nonadecanoyl-[(phenol)carboxyphthiodiolenone synthase] + 2 (S)-methylmalonyl-CoA + 3 malonyl-CoA + 5 NADPH + 10 H(+) = C37-(phenol)carboxyphthiodiolenone-[(phenol)carboxyphthiodiolenone synthase] + 5 CO2 + 5 NADP(+) + 5 CoA + 2 H2O. Its pathway is lipid metabolism; fatty acid biosynthesis. Part of the PpsABCDE complex involved in the biosynthesis of the lipid core common to phthiocerols and phenolphthiocerols by successive additions of malonyl-CoA or methylmalonyl-CoA extender units. PpsA can accept as substrate the activated forms of either icosanoyl (C20), docosanoyl (C22) or lignoceroyl (C24) groups from FadD26, or a (4-hydroxyphenyl)-C17 or (4-hydroxyphenyl)-C19 fatty acyl from FadD29. PpsA initiates the biosynthesis and extends its substrate using a malonyl-CoA extender unit. The PpsB and PpsC proteins add the second and third malonyl-CoA extender units. PpsD adds an (R)-methylmalonyl unit and PpsE adds a second (R)-methylmalonyl unit. The incorporation of the methylmalonyl units results in formation of two branched methyl groups in the elongated product. The chain is Phenolphthiocerol/phthiocerol polyketide synthase subunit C (ppsD) from Mycobacterium bovis (strain ATCC BAA-935 / AF2122/97).